We begin with the raw amino-acid sequence, 803 residues long: Ras GTPase-activating protein 4B (803 aa).

C2 domains follow at residues 1–105 and 116–232; these read MAKR…SGWA and VQGE…EGWF. Residues aspartate 21, aspartate 27, aspartate 74, aspartate 76, serine 79, aspartate 82, aspartate 149, aspartate 155, aspartate 202, aspartate 204, serine 207, and aspartate 210 each coordinate Ca(2+). The Ras-GAP domain occupies 318-546; the sequence is GLAKDFLDLL…AQLKDFITKL (229 aa). Residues 566–673 form the PH domain; that stretch reads PPVKEGPLFI…WLSALRKVSI (108 aa). The segment at 675-711 adopts a Btk-type zinc-finger fold; the sequence is NTGLLGSYHPGVFRGDKWSCCHQKEKTGQGCDKTRSR. Zn(2+) is bound by residues histidine 683, cysteine 694, cysteine 695, and cysteine 705. Residues 781-803 form a disordered region; that stretch reads EAHSSSPAGSPPSEPNCLLELQT.

It depends on Ca(2+) as a cofactor.

Its subcellular location is the cytoplasm. It localises to the cytosol. The protein localises to the cell membrane. Ca(2+)-dependent Ras GTPase-activating protein, that may play a role in the Ras-MAPK pathway. This Homo sapiens (Human) protein is Ras GTPase-activating protein 4B (RASA4B).